We begin with the raw amino-acid sequence, 208 residues long: MAIERYFIKEGVREMLIDEYLEKELRRAGYGGIDIKKTPLGTKVIIFAANPGYVIGRGGRRIRELTRILERQFGLENPQIEVEEIKNPYLNAKVQAVRLAQALERGVHFRRAAYAAIRAIMRNGARGVEIRISGKLTGERAKSVRFYQGYLAKVGNPAETLVSKGYAQALLKLGVIGVKVSIMPPDAKLPDEIEVIEKPIQEEEVSEE.

One can recognise a KH type-2 domain in the interval 17–86 (IDEYLEKELR…NPQIEVEEIK (70 aa)).

It belongs to the universal ribosomal protein uS3 family. As to quaternary structure, part of the 30S ribosomal subunit.

Functionally, binds the lower part of the 30S subunit head. In Thermococcus onnurineus (strain NA1), this protein is Small ribosomal subunit protein uS3.